Here is a 201-residue protein sequence, read N- to C-terminus: ATP-dependent Clp protease proteolytic subunit (201 aa).

Ser98 functions as the Nucleophile in the catalytic mechanism. His123 is an active-site residue.

It belongs to the peptidase S14 family. In terms of assembly, fourteen ClpP subunits assemble into 2 heptameric rings which stack back to back to give a disk-like structure with a central cavity, resembling the structure of eukaryotic proteasomes.

Its subcellular location is the cytoplasm. The enzyme catalyses Hydrolysis of proteins to small peptides in the presence of ATP and magnesium. alpha-casein is the usual test substrate. In the absence of ATP, only oligopeptides shorter than five residues are hydrolyzed (such as succinyl-Leu-Tyr-|-NHMec, and Leu-Tyr-Leu-|-Tyr-Trp, in which cleavage of the -Tyr-|-Leu- and -Tyr-|-Trp bonds also occurs).. In terms of biological role, cleaves peptides in various proteins in a process that requires ATP hydrolysis. Has a chymotrypsin-like activity. Plays a major role in the degradation of misfolded proteins. The polypeptide is ATP-dependent Clp protease proteolytic subunit (Rickettsia felis (strain ATCC VR-1525 / URRWXCal2) (Rickettsia azadi)).